The sequence spans 201 residues: Small ribosomal subunit protein uS4 (201 aa).

The tract at residues 1 to 42 is disordered; that stretch reads MARYTGPVTRKSRRLGTDLVGGDQSFEKRPYPPGQHGRARIK. The S4 RNA-binding domain maps to 91–157; that stretch reads SRLDNVVYRA…VPFQIARETA (67 aa).

The protein belongs to the universal ribosomal protein uS4 family. In terms of assembly, part of the 30S ribosomal subunit. Contacts protein S5. The interaction surface between S4 and S5 is involved in control of translational fidelity.

In terms of biological role, one of the primary rRNA binding proteins, it binds directly to 16S rRNA where it nucleates assembly of the body of the 30S subunit. With S5 and S12 plays an important role in translational accuracy. In Mycobacterium marinum (strain ATCC BAA-535 / M), this protein is Small ribosomal subunit protein uS4.